Reading from the N-terminus, the 270-residue chain is Formamidopyrimidine-DNA glycosylase (270 aa).

The Schiff-base intermediate with DNA role is filled by P2. E3 functions as the Proton donor in the catalytic mechanism. Catalysis depends on K58, which acts as the Proton donor; for beta-elimination activity. Positions 91, 110, and 151 each coordinate DNA. The FPG-type zinc finger occupies 236-270; it reads FAYGRGGQPCKVCGTTLREIKLGQRASVYCPKCQR. Catalysis depends on R260, which acts as the Proton donor; for delta-elimination activity.

Belongs to the FPG family. In terms of assembly, monomer. Zn(2+) serves as cofactor.

It catalyses the reaction Hydrolysis of DNA containing ring-opened 7-methylguanine residues, releasing 2,6-diamino-4-hydroxy-5-(N-methyl)formamidopyrimidine.. The enzyme catalyses 2'-deoxyribonucleotide-(2'-deoxyribose 5'-phosphate)-2'-deoxyribonucleotide-DNA = a 3'-end 2'-deoxyribonucleotide-(2,3-dehydro-2,3-deoxyribose 5'-phosphate)-DNA + a 5'-end 5'-phospho-2'-deoxyribonucleoside-DNA + H(+). In terms of biological role, involved in base excision repair of DNA damaged by oxidation or by mutagenic agents. Acts as a DNA glycosylase that recognizes and removes damaged bases. Has a preference for oxidized purines, such as 7,8-dihydro-8-oxoguanine (8-oxoG). Has AP (apurinic/apyrimidinic) lyase activity and introduces nicks in the DNA strand. Cleaves the DNA backbone by beta-delta elimination to generate a single-strand break at the site of the removed base with both 3'- and 5'-phosphates. The protein is Formamidopyrimidine-DNA glycosylase of Pseudomonas syringae pv. tomato (strain ATCC BAA-871 / DC3000).